A 319-amino-acid polypeptide reads, in one-letter code: Selection and upkeep of intraepithelial T-cells protein 9 (319 aa).

The N-terminal stretch at 1–26 is a signal peptide; it reads MESSASCLPGFFMSFLLLQNTVLTQA. In terms of domain architecture, Ig-like V-type spans 27–117; it reads MRSDIKINIQ…TNQEKKRSIV (91 aa). Topologically, residues 27–139 are extracellular; the sequence is MRSDIKINIQ…LMSNKFSCPS (113 aa). Residues Cys47 and Cys101 are joined by a disulfide bond. N-linked (GlcNAc...) asparagine glycosylation occurs at Asn105. The chain crosses the membrane as a helical span at residues 140 to 160; the sequence is IYLITIIFLNFLRGILVFCCL. Over 161–183 the chain is Cytoplasmic; sequence RRKPVCFRNLMSTVMEALYSKMG. A helical transmembrane segment spans residues 184 to 204; it reads VCCLLIWECLLLVLYIAFLPI. Residues 205–228 lie on the Extracellular side of the membrane; that stretch reads YVSFRSRAFLLDDTYPLYTNWLWN. Residues 229–249 form a helical membrane-spanning segment; that stretch reads ICIILTVIMVLFPGLILCLLW. Residues 250–319 lie on the Cytoplasmic side of the membrane; it reads TLNCYGQVSS…DDTASTLFIS (70 aa).

Belongs to the SKINT family. Expressed in skin, thymus and testis.

It localises to the membrane. Functionally, may act by engaging a cell surface molecule on immature T-cells in the embryonic thymus. This chain is Selection and upkeep of intraepithelial T-cells protein 9 (Skint9), found in Mus musculus (Mouse).